The chain runs to 658 residues: MVARLLLRSWSRGLAVGPGAPCRPLSTGFEPSQYLQRSIVPTMHYQDSLPRLPIPKLEDTIRRYLSAQKPLLDDSQFRKTEQLCKSFETGIGKELHEQLVTQDKQNKHTSYISGPWFDMYLTARDPVVLNFNPFISFNPDPKSEYNDQLTRATNMTVSAIRFLKTLRADLLEPEVFHLNPAKSDTDTFKRFIRFVPSFLSWYGAYLVNAYPLDMSQYYRLFNSTRLPRPHRDELFTDDKARHLLVLRKGHFYIFDVLDQDGNIVSASEIQAHLKYILSDNSPAPEFPLSYLTSENRDIWAELRQRLVSGGNEATLGKVDSAVFCLCLDDFPIRDFVHLSHSMLHGDGTNRWFDKSFNLIIAKDGTAAIHFEHAWGDGVAVLRFFNEVFKDSTQAPAITPQSQPASTDSSVAVQKLNFKLSDALKTGISAAKEKFDATVKSLTIDYIRFQRGGREFLKKQKLSPDSMAQLAFQMAFLRQYGQTVATYESCSTAAFKHGRTETIRPASIFTKTCSEAFVREPSKYSAGELQQMMAKCSTYHNQLTREAAMGQGFDRHLFALRYLAAARGISMPELFLDPAYRQINHNILSTSTLSSPAVNIGCFAPVVPDGFGIGYSVQDNWIGCNVSAYQSRNAREFLQCVEKALEDMFDALEGKMIKT.

The transit peptide at 1-25 (MVARLLLRSWSRGLAVGPGAPCRPL) directs the protein to the mitochondrion. At 26-178 (STGFEPSQYL…DLLEPEVFHL (153 aa)) the chain is on the mitochondrial matrix side. Position 69 is an N6-succinyllysine (lysine 69). N6-acetyllysine is present on lysine 79. An N6-succinyllysine modification is found at lysine 85. Positions 179-208 (NPAKSDTDTFKRFIRFVPSFLSWYGAYLVN) form an intramembrane region, note=Mitochondrial inner membrane. Topologically, residues 209–658 (AYPLDMSQYY…DALEGKMIKT (450 aa)) are mitochondrial matrix. Lysine 239 bears the N6-acetyllysine; alternate mark. At lysine 239 the chain carries N6-succinyllysine; alternate. Histidine 372 acts as the Proton acceptor in catalysis. Lysine 418 carries the post-translational modification N6-acetyllysine; alternate. At lysine 418 the chain carries N6-succinyllysine; alternate. N6-succinyllysine occurs at positions 424 and 439. Residue 452-464 (GREFLKKQKLSPD) participates in CoA binding. The (R)-carnitine site is built by tyrosine 486, serine 488, and threonine 499. At lysine 510 the chain carries N6-acetyllysine; alternate. At lysine 510 the chain carries N6-succinyllysine; alternate.

Belongs to the carnitine/choline acetyltransferase family.

It is found in the mitochondrion inner membrane. The enzyme catalyses (R)-carnitine + hexadecanoyl-CoA = O-hexadecanoyl-(R)-carnitine + CoA. It catalyses the reaction octanoyl-CoA + (R)-carnitine = O-octanoyl-(R)-carnitine + CoA. The catalysed reaction is decanoyl-CoA + (R)-carnitine = O-decanoyl-(R)-carnitine + CoA. It carries out the reaction dodecanoyl-CoA + (R)-carnitine = O-dodecanoyl-R-carnitine + CoA. The enzyme catalyses tetradecanoyl-CoA + (R)-carnitine = O-tetradecanoyl-(R)-carnitine + CoA. It catalyses the reaction (R)-carnitine + octadecanoyl-CoA = O-octadecanoyl-(R)-carnitine + CoA. The catalysed reaction is eicosanoyl-CoA + (R)-carnitine = O-eicosanoyl-(R)-carnitine + CoA. It carries out the reaction (9Z)-tetradecenoyl-CoA + (R)-carnitine = O-(9Z)-tetradecenoyl-(R)-carnitine + CoA. The enzyme catalyses (5Z)-tetradecenoyl-CoA + (R)-carnitine = O-(5Z)-tetradecenoyl-(R)-carnitine + CoA. It catalyses the reaction (R)-carnitine + (9Z)-octadecenoyl-CoA = O-(9Z)-octadecenoyl-(R)-carnitine + CoA. The catalysed reaction is 4,8-dimethylnonanoyl-CoA + (R)-carnitine = O-4,8-dimethylnonanoyl-(R)-carnitine + CoA. Its pathway is lipid metabolism; fatty acid beta-oxidation. Its function is as follows. Involved in the intramitochondrial synthesis of acylcarnitines from accumulated acyl-CoA metabolites. Reconverts acylcarnitines back into the respective acyl-CoA esters that can then undergo beta-oxidation, an essential step for the mitochondrial uptake of long-chain fatty acids and their subsequent beta-oxidation in the mitochondrion. Active with medium (C8-C12) and long-chain (C14-C18) acyl-CoA esters. The protein is Carnitine O-palmitoyltransferase 2, mitochondrial (CPT2) of Bos taurus (Bovine).